The sequence spans 1295 residues: Phosphoribosylformylglycinamidine synthase (1295 aa).

Residues 305-327 (WPGAATGSGGEIRDEGATGRGAK) are disordered. ATP-binding positions include 307 to 318 (GAATGSGGEIRD) and Ala678. Glu718, Asn722, and Asp884 together coordinate Mg(2+). Residue Ser886 participates in ATP binding. Positions 1042–1295 (VAVLREQGVN…IFRNARKQLG (254 aa)) constitute a Glutamine amidotransferase type-1 domain. Cys1135 acts as the Nucleophile in catalysis. Catalysis depends on residues His1260 and Glu1262.

The protein in the N-terminal section; belongs to the FGAMS family. Monomer.

The protein localises to the cytoplasm. It catalyses the reaction N(2)-formyl-N(1)-(5-phospho-beta-D-ribosyl)glycinamide + L-glutamine + ATP + H2O = 2-formamido-N(1)-(5-O-phospho-beta-D-ribosyl)acetamidine + L-glutamate + ADP + phosphate + H(+). The protein operates within purine metabolism; IMP biosynthesis via de novo pathway; 5-amino-1-(5-phospho-D-ribosyl)imidazole from N(2)-formyl-N(1)-(5-phospho-D-ribosyl)glycinamide: step 1/2. In terms of biological role, phosphoribosylformylglycinamidine synthase involved in the purines biosynthetic pathway. Catalyzes the ATP-dependent conversion of formylglycinamide ribonucleotide (FGAR) and glutamine to yield formylglycinamidine ribonucleotide (FGAM) and glutamate. This is Phosphoribosylformylglycinamidine synthase from Shigella boydii serotype 4 (strain Sb227).